Consider the following 354-residue polypeptide: S-adenosylmethionine:tRNA ribosyltransferase-isomerase (354 aa).

It belongs to the QueA family. As to quaternary structure, monomer.

It localises to the cytoplasm. The enzyme catalyses 7-aminomethyl-7-carbaguanosine(34) in tRNA + S-adenosyl-L-methionine = epoxyqueuosine(34) in tRNA + adenine + L-methionine + 2 H(+). The protein operates within tRNA modification; tRNA-queuosine biosynthesis. Transfers and isomerizes the ribose moiety from AdoMet to the 7-aminomethyl group of 7-deazaguanine (preQ1-tRNA) to give epoxyqueuosine (oQ-tRNA). The polypeptide is S-adenosylmethionine:tRNA ribosyltransferase-isomerase (Salmonella heidelberg (strain SL476)).